Here is a 291-residue protein sequence, read N- to C-terminus: Probable prolyl 4-hydroxylase 12 (291 aa).

At 1-156 (MACLSRIFLI…GEEPSSVLHE (156 aa)) the chain is on the cytoplasmic side. The 115-residue stretch at 125–239 (NGGSIKVRSY…LLVATKLIYA (115 aa)) folds into the Fe2OG dioxygenase domain. 2 residues coordinate Fe cation: K142 and D144. Residues 157–173 (SLLATVVLYLSNTTQGG) form a helical; Signal-anchor for type II membrane protein membrane-spanning segment. Residues 174-291 (ELLFPNSEMK…GTCRKSCNAC (118 aa)) are Lumenal-facing. The N-linked (GlcNAc...) asparagine glycan is linked to N211. H220 contributes to the Fe cation binding site. In terms of domain architecture, ShKT spans 251–291 (CSDEDENCGRWAKLGECKKNPVYMIGSPDYYGTCRKSCNAC). Disulfide bonds link C251/C291, C258/C284, and C267/C288.

This sequence belongs to the P4HA family. Fe(2+) serves as cofactor. Requires L-ascorbate as cofactor.

Its subcellular location is the endoplasmic reticulum membrane. The catalysed reaction is L-prolyl-[collagen] + 2-oxoglutarate + O2 = trans-4-hydroxy-L-prolyl-[collagen] + succinate + CO2. Its function is as follows. Catalyzes the post-translational formation of 4-hydroxyproline in -Xaa-Pro-Gly- sequences in proline-rich peptide sequences of plant glycoproteins and other proteins. Hydroxyprolines are important constituent of many plant cell wall glycoproteins such as extensins, hydroxyproline-rich glycoproteins, lectins and arabinogalactan proteins. In Arabidopsis thaliana (Mouse-ear cress), this protein is Probable prolyl 4-hydroxylase 12.